Consider the following 519-residue polypeptide: Dideacetyl fusicoccin A C-19 hydroxylase (519 aa).

The chain crosses the membrane as a helical span at residues L16–S36. N177, N327, N414, and N432 each carry an N-linked (GlcNAc...) asparagine glycan. C454 contributes to the heme binding site.

It belongs to the cytochrome P450 family. The cofactor is heme.

It localises to the membrane. It functions in the pathway mycotoxin biosynthesis. Functionally, cytochrome P450 monooxygenase; part of the 2 gene clusters that mediate the biosynthesis of fusicoccins, diterpene glucosides that display phytohormone-like activity and function as potent activators of plasma membrane H(+)-ATPases in plants by modifying 14-3-3 proteins and cause the plant disease constriction canker. The first step in the pathway is performed by the fusicoccadiene synthase PaFS that possesses both prenyl transferase and terpene cyclase activity, converting isopentenyl diphosphate and dimethylallyl diphosphate into geranylgeranyl diphosphate (GGDP) and successively converting GGDP into fusicocca-2,10(14)-diene, a precursor for fusicoccin H. The second step is the oxidation at the C-8 position by the cytochrome P450 monooxygenase PaP450-2 to yield fusicocca-2,10(14)-diene-8-beta-ol. The cytochrome P450 monooxygenase PaP450-1 then catalyzes the hydroxylation at the C-16 position to produce fusicocca-2,10(14)-diene-8-beta,16-diol. The dioxygenase fc-dox then catalyzes the 16-oxydation of fusicocca-2,10(14)-diene-8-beta,16-diol to yield an aldehyde (8-beta-hydroxyfusicocca-1,10(14)-dien-16-al). The short-chain dehydrogenase/reductase fc-sdr catalyzes the reduction of the aldehyde to yield fusicocca-1,10(14)-diene-8-beta,16-diol. The next step is the hydroxylation at C-9 performed by the cytochrome P450 monooxygenase PaP450-3 that leads to fusicoccin H aglycon which is glycosylated to fusicoccin H by the O-glycosyltransferase PaGT. Hydroxylation at C-12 by the cytochrome P450 monooxygenase PaP450-4 leads then to the production of fusicoccin Q and is followed by methylation by the O-methyltransferase PaMT to yield fusicoccin P. Fusicoccin P is further converted to fusicoccin J via prenylation by the O-glucose prenyltransferase PaPT. Cytochrome P450 monooxygenase PaP450-5 then performs hydroxylation at C-19 to yield dideacetyl-fusicoccin A which is acetylated to 3'-O-deacetyl-fusicoccin A by the O-acetyltransferase PaAT-2. Finally, a another acetylation by the O-acetyltransferase PaAT-1 yields fusicoccin A. This is Dideacetyl fusicoccin A C-19 hydroxylase from Phomopsis amygdali (Fusicoccum amygdali).